Here is a 671-residue protein sequence, read N- to C-terminus: Zinc finger protein 568 (671 aa).

The disordered stretch occupies residues 1–31 (MERLSQMAGRRAWCAEDSVPRQEEEDRTRPS). Residues 18–29 (SVPRQEEEDRTR) are compositionally biased toward basic and acidic residues. 2 consecutive KRAB domains span residues 34–105 (VTFK…RRSP) and 124–195 (LRFE…IWHP). The interval 214-366 (EKMAKKHTCP…QGSERPHKCK (153 aa)) is disordered. Composition is skewed to basic and acidic residues over residues 226–251 (EDSKTRGDREVTRELEGQQVHQEGHL), 296–312 (IEREQLHSKAKASEHAQ), and 329–341 (RPQESRKDSERKK). C2H2-type zinc fingers lie at residues 363 to 385 (HKCKECGKAFHTPSQLSHHQKLH), 391 to 413 (YKCQECGKAFPSNAQLSLHHRVH), 419 to 441 (FECKECGKAFMRPSHLLRHQRIH), 447 to 469 (HKCKECGKAFRYDTQLSLHLLTH), 475 to 497 (FECKDCDKVYSCASQLALHQMSH), 503 to 525 (HKCKECGKGFISDSHLLRHQSVH), 531 to 553 (YKCKECGKGFRRGSELARHQRAH), 559 to 581 (YKCKECGKSFTCTTELFRHQKVH), 587 to 609 (HKCKECGKAFIRRSELTHHERSH), 615 to 637 (YECKECGKTFGRGSELSRHQKIH), and 643 to 665 (YKCQQCGKAFIRGSHLTQHQRIH).

It belongs to the krueppel C2H2-type zinc-finger protein family. As to quaternary structure, interacts with TRIM28. In terms of tissue distribution, little or no expression detected in most adult tissues (brain, liver, kidney, spleen, testis, ovary). In the hippocampus, detected in neural stem cells within the subventricular zone and subgranular zone.

Its subcellular location is the nucleus. In terms of biological role, has transcriptional repression activity, partially through the recruitment of the corepressor TRIM28 but also has repression activity independently of this interaction. Essential during embryonic development, where it acts as direct repressor of IGF2-P0, placental-specific transcript of IGF2, in early development and regulates convergent extension movements required for axis elongation and tissue morphogenesis in all germ layers. Also important for normal morphogenesis of extraembryonic tissues including the yolk sac, extraembryonic mesoderm and placenta. May enhance proliferation or maintenance of neural stem cells. This chain is Zinc finger protein 568, found in Mus musculus (Mouse).